Here is a 700-residue protein sequence, read N- to C-terminus: Polyphosphate kinase (700 aa).

Asparagine 45 lines the ATP pocket. Arginine 373 and arginine 403 together coordinate Mg(2+). A PLD phosphodiesterase 1 domain is found at 428-462 (PGMKIHAKLLLITRREEQGFVRYAHIGTGNFHERT). Residue histidine 433 is the Phosphohistidine intermediate of the active site. Positions 466, 562, and 590 each coordinate ATP. The 31-residue stretch at 585 to 615 (DRFLEHPRVLVVHNDGDPQVFISSADWMERN) folds into the PLD phosphodiesterase 2 domain.

It belongs to the polyphosphate kinase 1 (PPK1) family. Requires Mg(2+) as cofactor. In terms of processing, an intermediate of this reaction is the autophosphorylated ppk in which a phosphate is covalently linked to a histidine residue through a N-P bond.

The catalysed reaction is [phosphate](n) + ATP = [phosphate](n+1) + ADP. Functionally, catalyzes the reversible transfer of the terminal phosphate of ATP to form a long-chain polyphosphate (polyP). The polypeptide is Polyphosphate kinase (Vibrio vulnificus (strain YJ016)).